Consider the following 1132-residue polypeptide: MSTPLKVWQRWSTPTKATNPDSNGSSHGTGLDMVTPVSGRVSEIQFDDPRILPEKISELEKELFEYQHSMGLLLIEKKEWSSQYEALQQAFEEVNECLKQERNAHLIAIADVEKREEGLRKALGIEKQCALDLEKALKELRAENAEIKFTADSKLTEANALVRSVEEKSLEVEAKLRAVDAKLAEVSRKSSDVERKAKEVEARESSLQRERFSYIAEREADEATLSKQREDLREWERKLQEGEERVAKSQMIVKQREDRANESDKIIKQKGKELEEAQKKIDAANLAVKKLEDDVSSRIKDLALREQETDVLKKSIETKARELQALQEKLEAREKMAVQQLVDEHQAKLDSTQREFELEMEQKRKSIDDSLKSKVAEVEKREAEWKHMEEKVAKREQALDRKLEKHKEKENDFDLRLKGISGREKALKSEEKALETEKKKLLEDKEIILNLKALVEKVSGENQAQLSEINKEKDELRVTEEERSEYLRLQTELKEQIEKCRSQQELLQKEAEDLKAQRESFEKEWEELDERKAKIGNELKNITDQKEKLERHIHLEEERLKKEKQAANENMERELETLEVAKASFAETMEYERSMLSKKAESERSQLLHDIEMRKRKLESDMQTILEEKERELQAKKKLFEEEREKELSNINYLRDVARREMMDMQNERQRIEKEKLEVDSSKNHLEEQQTEIRKDVDDLVALTKKLKEQREQFISERSRFLSSMESNRNCSRCGELLSELVLPEIDNLEMPNMSKLANILDNEAPRQEMRDISPTAAGLGLPVTGGKVSWFRKCTSKMLKLSPIKMTEPSVTWNLADQEPQSTEQANVGGPSTTVQAATTYSFDVQKAESETGTKEVEVTNVNSDGDQSDINSKAQEVAADSLSNLDVDGQSRMKGKGKARTRRTRSVKDVVDDAKALYGESINLYEPNDSTENVDDSTKASTGETGRSDKAISKNGRKRGRVGSLRTCTTEQDGNESDGKSDSVTGGAHQRKRRQKVASEQQGEVVGQRYNLRRPRRVTGEPALSKKNEDIGGVQQEEGIHCTQATATASVGVAVSDNGVSTNVVQHEATADSEDTDAGSPKRTDESEAMSEDVNKTPLRADSDGEDDESDAEHPGKVSIGKKLWTFLTT.

A disordered region spans residues 1 to 31 (MSTPLKVWQRWSTPTKATNPDSNGSSHGTGL). Over residues 10-28 (RWSTPTKATNPDSNGSSHG) the composition is skewed to polar residues. A coiled-coil region spans residues 73–714 (LLIEKKEWSS…KKLKEQREQF (642 aa)). Short sequence motifs (nuclear localization signal) lie at residues 379–386 (EKREAEWK) and 693–700 (IRKDVDDL). S774 and S803 each carry phosphoserine. The span at 849–859 (AESETGTKEVE) shows a compositional bias: basic and acidic residues. Disordered regions lie at residues 849-871 (AESE…DQSD), 883-909 (SLSN…TRSV), 924-1039 (INLY…VQQE), and 1061-1132 (GVST…FLTT). The span at 861–871 (TNVNSDGDQSD) shows a compositional bias: polar residues. A phosphoserine mark is found at S865 and S883. A compositionally biased stretch (basic residues) spans 895–907 (MKGKGKARTRRTR). S908 is subject to Phosphoserine. 3 positions are modified to phosphoserine: S1093, S1105, and S1112. Positions 1095 to 1105 (DVNKTPLRADS) are enriched in basic and acidic residues.

The protein belongs to the CRWN family. Core component of the LINC complex which is composed of inner nuclear membrane SUN domain-containing proteins coupled to outer nuclear membrane WIP and WIT proteins. The LINC complex also involves nucleoskeletal proteins CRWN/LINC and possibly KAKU4 and the cytoskeletal myosin KAKU1. Interacts with SUN1 and SUN2. Binds to KAKU4. Expressed at low levels in roots, leaves, flowers and flower stalks.

The protein localises to the nucleus membrane. It is found in the nucleus. The protein resides in the nucleoplasm. It localises to the nucleus lamina. Functionally, component of SUN-protein-containing multivariate complexes also called LINC complexes which link the nucleoskeleton and cytoskeleton by providing versatile outer nuclear membrane attachment sites for cytoskeletal filaments. Required for nucleus structure organization (e.g. size and shape). This is Protein CROWDED NUCLEI 1 from Arabidopsis thaliana (Mouse-ear cress).